Consider the following 675-residue polypeptide: Putative acyl-coenzyme A oxidase 3.2, peroxisomal (675 aa).

The N-terminal 34 residues, 1 to 34 (MSENVELRRAHILANHILRSPRPSSNPSLTPEVC), are a transit peptide targeting the peroxisome. 442-457 (AVGGQGLKTENRVGHL) lines the FAD pocket.

The protein belongs to the acyl-CoA oxidase family. The cofactor is FAD.

Its subcellular location is the peroxisome. The catalysed reaction is a 2,3-saturated acyl-CoA + O2 = a (2E)-enoyl-CoA + H2O2. Functionally, catalyzes the desaturation of acyl-CoAs to 2-trans-enoyl-CoAs. The sequence is that of Putative acyl-coenzyme A oxidase 3.2, peroxisomal (ACX3.2) from Arabidopsis thaliana (Mouse-ear cress).